We begin with the raw amino-acid sequence, 1377 residues long: ATP-dependent helicase/nuclease subunit A (1377 aa).

A UvrD-like helicase ATP-binding domain is found at 4–478 (TSWTPGQQKV…IDLSKNFRSR (475 aa)). 25-32 (AAAGSGKT) serves as a coordination point for ATP. One can recognise a UvrD-like helicase C-terminal domain in the interval 526–867 (FLFSDTKTEL…RIMSIHKSKG (342 aa)). Positions 1036-1065 (FEEESDEQSDEERSDEERSDGEQSDGEQSD) are enriched in acidic residues. The interval 1036-1072 (FEEESDEQSDEERSDEERSDGEQSDGEQSDGEQPRKD) is disordered.

The protein belongs to the helicase family. AddA subfamily. Heterodimer of AddA and AddB/RexB. Requires Mg(2+) as cofactor.

It catalyses the reaction Couples ATP hydrolysis with the unwinding of duplex DNA by translocating in the 3'-5' direction.. It carries out the reaction ATP + H2O = ADP + phosphate + H(+). Functionally, the heterodimer acts as both an ATP-dependent DNA helicase and an ATP-dependent, dual-direction single-stranded exonuclease. Recognizes the chi site generating a DNA molecule suitable for the initiation of homologous recombination. The AddA nuclease domain is required for chi fragment generation; this subunit has the helicase and 3' -&gt; 5' nuclease activities. The sequence is that of ATP-dependent helicase/nuclease subunit A from Lachnoclostridium phytofermentans (strain ATCC 700394 / DSM 18823 / ISDg) (Clostridium phytofermentans).